Here is a 763-residue protein sequence, read N- to C-terminus: Xaa-Pro dipeptidyl-peptidase (763 aa).

Catalysis depends on charge relay system residues serine 348, aspartate 468, and histidine 498.

The protein belongs to the peptidase S15 family. In terms of assembly, homodimer.

The protein resides in the cytoplasm. It catalyses the reaction Hydrolyzes Xaa-Pro-|- bonds to release unblocked, N-terminal dipeptides from substrates including Ala-Pro-|-p-nitroanilide and (sequentially) Tyr-Pro-|-Phe-Pro-|-Gly-Pro-|-Ile.. Its function is as follows. Removes N-terminal dipeptides sequentially from polypeptides having unsubstituted N-termini provided that the penultimate residue is proline. The protein is Xaa-Pro dipeptidyl-peptidase (pepX) of Lactococcus lactis subsp. lactis (strain IL1403) (Streptococcus lactis).